Here is a 630-residue protein sequence, read N- to C-terminus: Heat shock cognate 70 kDa protein 3 (630 aa).

The interval 611-630 (FYQGNNNPKPTTTTFNQDLD) is disordered. A compositionally biased stretch (low complexity) spans 615-630 (NNNPKPTTTTFNQDLD).

Belongs to the heat shock protein 70 family.

In terms of biological role, may function in protein folding and assembly, and disassembly of protein complexes. This Dictyostelium discoideum (Social amoeba) protein is Heat shock cognate 70 kDa protein 3.